The primary structure comprises 248 residues: Inner membrane protein pE248R (248 aa).

Gly2 carries the N-myristoyl glycine; by host lipid modification. Over 2-199 (GGSTSKNSFK…ADAISAVFKN (198 aa)) the chain is Cytoplasmic. Residues 200–220 (IMVAAVVIVLIIVGFIAVFYF) traverse the membrane as a helical segment. At 221–248 (LHSRHRHEEEEEAEPLISNKVLKNAAVS) the chain is on the extracellular side.

Belongs to the asfivirus E248R family. Interacts with A151R.

Its subcellular location is the host membrane. It is found in the virion membrane. Functionally, essential for viral fusion with host endosomal membrane and core release. This is Inner membrane protein pE248R from African swine fever virus (strain Badajoz 1971 Vero-adapted) (Ba71V).